Consider the following 305-residue polypeptide: NAD kinase (305 aa).

Asp76 functions as the Proton acceptor in the catalytic mechanism. Residues 76 to 77, 150 to 151, Arg161, and Asp180 contribute to the NAD(+) site; these read DG and ND.

It belongs to the NAD kinase family. The cofactor is a divalent metal cation.

The protein localises to the cytoplasm. It catalyses the reaction NAD(+) + ATP = ADP + NADP(+) + H(+). Involved in the regulation of the intracellular balance of NAD and NADP, and is a key enzyme in the biosynthesis of NADP. Catalyzes specifically the phosphorylation on 2'-hydroxyl of the adenosine moiety of NAD to yield NADP. In Treponema pallidum (strain Nichols), this protein is NAD kinase.